The chain runs to 215 residues: Large ribosomal subunit protein uL1 (215 aa).

Belongs to the universal ribosomal protein uL1 family. Part of the 50S ribosomal subunit.

In terms of biological role, binds directly to 23S rRNA. Probably involved in E site tRNA release. Protein L1 is also a translational repressor protein, it controls the translation of its operon by binding to its mRNA. This chain is Large ribosomal subunit protein uL1, found in Methanospirillum hungatei JF-1 (strain ATCC 27890 / DSM 864 / NBRC 100397 / JF-1).